A 443-amino-acid polypeptide reads, in one-letter code: EP1-like glycoprotein 4 (443 aa).

Residues 1 to 22 (MEFSTTLALFFTLSIFLVGAQA) form the signal peptide. Residues 29–159 (QFRVVNEGGY…NGKFVWQSFD (131 aa)) enclose the Bulb-type lectin domain. Asparagine 66, asparagine 102, asparagine 258, and asparagine 269 each carry an N-linked (GlcNAc...) asparagine glycan. One copy of the WD repeat lies at 254–296 (GSQFNVSTFLSRPKHNATLSFLRLESDGNIRVWSYSTLATSTA). Residues 356-433 (CDPKTFHYFK…TSLVAYVKAP (78 aa)) form the PAN domain. Intrachain disulfides connect cysteine 387/cysteine 409 and cysteine 391/cysteine 397. Asparagine 434 carries N-linked (GlcNAc...) asparagine glycosylation.

It localises to the secreted. Its subcellular location is the cell wall. This Arabidopsis thaliana (Mouse-ear cress) protein is EP1-like glycoprotein 4.